Consider the following 608-residue polypeptide: Albumin (608 aa).

An N-terminal signal peptide occupies residues 1–18 (MKWVTFISLLLLFSSAYS). A propeptide spanning residues 19-24 (RGVTRR) is cleaved from the precursor. Albumin domains follow at residues 19 to 210 (RGVT…DALR), 211 to 403 (EKVL…EFKP), and 404 to 601 (LVEE…KLVA). A Cu cation-binding site is contributed by His27. Residue Ser29 is modified to Phosphoserine. 2 residues coordinate Ca(2+): Glu30 and Asp37. The cysteines at positions 77 and 86 are disulfide-linked. Ser82 and Ser89 each carry phosphoserine. Residue His91 coordinates Zn(2+). Disulfide bonds link Cys99–Cys115, Cys114–Cys125, Cys148–Cys193, Cys192–Cys201, Cys224–Cys270, and Cys269–Cys277. Lys229 bears the N6-succinyllysine mark. Residue Glu268 coordinates Ca(2+). 2 residues coordinate Zn(2+): His271 and Asp273. Positions 273, 276, 279, and 283 each coordinate Ca(2+). Cystine bridges form between Cys289–Cys303, Cys302–Cys313, Cys340–Cys385, Cys384–Cys393, Cys416–Cys462, Cys461–Cys472, Cys485–Cys501, and Cys500–Cys511. Residue Ser443 is modified to Phosphoserine. Phosphothreonine occurs at positions 444 and 446. Position 460 is an N6-succinyllysine (Lys460). Phosphoserine is present on Ser513. Cystine bridges form between Cys538–Cys583 and Cys582–Cys591. An N6-methyllysine modification is found at Lys558. Thr570 is modified (phosphothreonine). N6-succinyllysine is present on Lys588.

It belongs to the ALB/AFP/VDB family. Interacts with FCGRT; this interaction regulates ALB homeostasis. Interacts with TASOR. In plasma, occurs in a covalently-linked complex with chromophore-bound alpha-1-microglobulin; this interaction does not prevent fatty acid binding to ALB. In terms of processing, phosphorylated by FAM20C in the extracellular medium. In terms of tissue distribution, plasma.

It localises to the secreted. Functionally, binds water, Ca(2+), Na(+), K(+), fatty acids, hormones, bilirubin and drugs. Its main function is the regulation of the colloidal osmotic pressure of blood. Major zinc transporter in plasma, typically binds about 80% of all plasma zinc. Major calcium and magnesium transporter in plasma, binds approximately 45% of circulating calcium and magnesium in plasma. Potentially has more than two calcium-binding sites and might additionally bind calcium in a non-specific manner. The shared binding site between zinc and calcium at residue Asp-273 suggests a crosstalk between zinc and calcium transport in the blood. The rank order of affinity is zinc &gt; calcium &gt; magnesium. Binds to the bacterial siderophore enterobactin and inhibits enterobactin-mediated iron uptake of E.coli from ferric transferrin, and may thereby limit the utilization of iron and growth of enteric bacteria such as E.coli. Does not prevent iron uptake by the bacterial siderophore aerobactin. The protein is Albumin (ALB) of Felis catus (Cat).